A 420-amino-acid chain; its full sequence is uncharacterized protein (420 aa).

In terms of domain architecture, YcaO spans 79 to 420 (GKGIDNEAAM…AVNTIRGAES (342 aa)).

This is an uncharacterized protein from Rhizobium leguminosarum bv. trifolii.